Here is a 125-residue protein sequence, read N- to C-terminus: Small ribosomal subunit protein bS6 (125 aa).

Residues Pro101–Ala125 are disordered.

Belongs to the bacterial ribosomal protein bS6 family.

Functionally, binds together with bS18 to 16S ribosomal RNA. This is Small ribosomal subunit protein bS6 from Laribacter hongkongensis (strain HLHK9).